A 354-amino-acid polypeptide reads, in one-letter code: Cellular communication network factor 6 (354 aa).

The N-terminal stretch at 1-23 (MRRLLFCTLLMTGLTQLCCRTQG) is a signal peptide. An IGFBP N-terminal domain is found at 44-117 (RTEVCRWPCR…RYETGVCAYL (74 aa)). Intrachain disulfides connect cysteine 48–cysteine 72, cysteine 52–cysteine 74, cysteine 54–cysteine 75, cysteine 61–cysteine 78, cysteine 86–cysteine 100, cysteine 92–cysteine 114, cysteine 209–cysteine 238, cysteine 219–cysteine 223, cysteine 247–cysteine 252, cysteine 268–cysteine 305, cysteine 285–cysteine 319, cysteine 296–cysteine 335, and cysteine 299–cysteine 337. Positions 208-253 (KCLVQATKWTPCSRTCGMGISNRVTNDNANCEMRKERRLCYIQPCS) constitute a TSP type-1 domain. The CTCK domain occupies 268-342 (CQPTFQLPKA…TSCVCQRDCR (75 aa)). Asparagine 308 carries an N-linked (GlcNAc...) asparagine glycan.

It belongs to the CCN family.

The protein resides in the secreted. The protein localises to the mitochondrion. In terms of biological role, plays a role in mitochondrial electron transport and mitochondrial respiration. This Mus musculus (Mouse) protein is Cellular communication network factor 6.